Here is a 352-residue protein sequence, read N- to C-terminus: B1 bradykinin receptor (352 aa).

Topologically, residues 1–41 (MASWPPLELQSSNQSQLFPQNATACDNAPEAWDLLHRVLPT) are extracellular. 2 N-linked (GlcNAc...) asparagine glycosylation sites follow: N13 and N21. Residues 42 to 62 (FIISICSFGLLGNLFVLLVFL) form a helical membrane-spanning segment. At 63-72 (LPRRRLNVAE) the chain is on the cytoplasmic side. Residues 73–93 (IYLANLAASDLVFVLGLPFWA) form a helical membrane-spanning segment. Residues 94 to 110 (ENIWNQFNWPFGALLCR) lie on the Extracellular side of the membrane. Residues C109 and C188 are joined by a disulfide bond. A helical transmembrane segment spans residues 111–131 (GINGVIKANLFISIFLVVAIS). Topologically, residues 132–153 (QDRYCLLVHPMASRRRQRRRQA) are cytoplasmic. Residues 154–174 (RVTCVLIWVVGGLLSIPTFLL) traverse the membrane as a helical segment. Topologically, residues 175 to 206 (RSIQAVPDLNITACILLLPHEAWHFARIVELN) are extracellular. The N-linked (GlcNAc...) asparagine glycan is linked to N184. The chain crosses the membrane as a helical span at residues 207-227 (ILAFLLPLAAIVFFNYHILAS). Topologically, residues 228 to 250 (LRGREEVSRTRCGGRKDSKTTAL) are cytoplasmic. A helical membrane pass occupies residues 251-271 (ILTLVVAFLVCWAPYHFFAFL). Topologically, residues 272 to 294 (EFLFQVQAIRGCFWEDFIDLGLQ) are extracellular. The helical transmembrane segment at 295–315 (LANFLAFTNSSLNPVIYVFVG) threads the bilayer. Residues 316-352 (RLFRTKVWELYKQCTPKSLAPISSSHRKEIFQLFWRN) are Cytoplasmic-facing. Residue C329 is the site of S-palmitoyl cysteine attachment.

This sequence belongs to the G-protein coupled receptor 1 family. Bradykinin receptor subfamily. BDKRB1 sub-subfamily.

The protein localises to the cell membrane. This is a receptor for bradykinin. Could be a factor in chronic pain and inflammation. In Chlorocebus aethiops (Green monkey), this protein is B1 bradykinin receptor (BDKRB1).